Here is an 878-residue protein sequence, read N- to C-terminus: Phosphoenolpyruvate carboxylase (878 aa).

Active-site residues include His-140 and Lys-545.

Belongs to the PEPCase type 1 family. Mg(2+) serves as cofactor.

It catalyses the reaction oxaloacetate + phosphate = phosphoenolpyruvate + hydrogencarbonate. In terms of biological role, forms oxaloacetate, a four-carbon dicarboxylic acid source for the tricarboxylic acid cycle. This is Phosphoenolpyruvate carboxylase from Pseudomonas aeruginosa (strain ATCC 15692 / DSM 22644 / CIP 104116 / JCM 14847 / LMG 12228 / 1C / PRS 101 / PAO1).